We begin with the raw amino-acid sequence, 156 residues long: Small ribosomal subunit protein uS7 (156 aa).

It belongs to the universal ribosomal protein uS7 family. In terms of assembly, part of the 30S ribosomal subunit. Contacts proteins S9 and S11.

One of the primary rRNA binding proteins, it binds directly to 16S rRNA where it nucleates assembly of the head domain of the 30S subunit. Is located at the subunit interface close to the decoding center, probably blocks exit of the E-site tRNA. In Campylobacter fetus subsp. fetus (strain 82-40), this protein is Small ribosomal subunit protein uS7.